The primary structure comprises 172 residues: MKHTLSVLVEDEAGVLTRIAGLFARRGFNIESLAVGSAEQGDVSRITMVVPGDENTIEQLTKQLYKLVNVIKVQDITETPCVERELMLVKVSANAPNRAEVIELAQVFRARIVDISEDTVTIEVVGDPGKMVAILQMLAKFGIKEVARTGKIALVRESGVNTEYLKSLESKF.

In terms of domain architecture, ACT spans 4–78; sequence TLSVLVEDEA…NVIKVQDITE (75 aa).

This sequence belongs to the acetolactate synthase small subunit family. Dimer of large and small chains.

It catalyses the reaction 2 pyruvate + H(+) = (2S)-2-acetolactate + CO2. It functions in the pathway amino-acid biosynthesis; L-isoleucine biosynthesis; L-isoleucine from 2-oxobutanoate: step 1/4. Its pathway is amino-acid biosynthesis; L-valine biosynthesis; L-valine from pyruvate: step 1/4. This Synechocystis sp. (strain ATCC 27184 / PCC 6803 / Kazusa) protein is Acetolactate synthase small subunit (ilvH).